A 128-amino-acid polypeptide reads, in one-letter code: Histone H2A (128 aa).

This sequence belongs to the histone H2A family. In terms of assembly, the nucleosome is a histone octamer containing two molecules each of H2A, H2B, H3 and H4 assembled in one H3-H4 heterotetramer and two H2A-H2B heterodimers. The octamer wraps approximately 147 bp of DNA.

Its subcellular location is the nucleus. The protein resides in the chromosome. In terms of biological role, core component of nucleosome. Nucleosomes wrap and compact DNA into chromatin, limiting DNA accessibility to the cellular machineries which require DNA as a template. Histones thereby play a central role in transcription regulation, DNA repair, DNA replication and chromosomal stability. DNA accessibility is regulated via a complex set of post-translational modifications of histones, also called histone code, and nucleosome remodeling. The sequence is that of Histone H2A (HTA1) from Encephalitozoon cuniculi (strain GB-M1) (Microsporidian parasite).